The primary structure comprises 417 residues: Serine hydroxymethyltransferase 1 (417 aa).

(6S)-5,6,7,8-tetrahydrofolate-binding positions include Leu121 and 125–127 (GHL). Position 230 is an N6-(pyridoxal phosphate)lysine (Lys230). 355 to 357 (SPF) contributes to the (6S)-5,6,7,8-tetrahydrofolate binding site.

It belongs to the SHMT family. As to quaternary structure, homodimer. It depends on pyridoxal 5'-phosphate as a cofactor.

The protein resides in the cytoplasm. The enzyme catalyses (6R)-5,10-methylene-5,6,7,8-tetrahydrofolate + glycine + H2O = (6S)-5,6,7,8-tetrahydrofolate + L-serine. Its pathway is one-carbon metabolism; tetrahydrofolate interconversion. It functions in the pathway amino-acid biosynthesis; glycine biosynthesis; glycine from L-serine: step 1/1. In terms of biological role, catalyzes the reversible interconversion of serine and glycine with tetrahydrofolate (THF) serving as the one-carbon carrier. This reaction serves as the major source of one-carbon groups required for the biosynthesis of purines, thymidylate, methionine, and other important biomolecules. Also exhibits THF-independent aldolase activity toward beta-hydroxyamino acids, producing glycine and aldehydes, via a retro-aldol mechanism. This chain is Serine hydroxymethyltransferase 1, found in Pseudomonas aeruginosa (strain ATCC 15692 / DSM 22644 / CIP 104116 / JCM 14847 / LMG 12228 / 1C / PRS 101 / PAO1).